The primary structure comprises 305 residues: Protein ORANGE, chloroplastic (305 aa).

Residues 1–54 (MSCLGRILSVSYPPDPYGSRLSVSKLSSPGRNRRLRWRFTALDSDSSSLDSDSS) constitute a chloroplast transit peptide. The next 2 membrane-spanning stretches (helical) occupy residues 144–164 (VYYATCFSLIAGIILFGGLLA) and 197–217 (IVASFSGGAVGVISALMVVEV). Residues 206 to 297 (VGVISALMVV…CTGMAMASEH (92 aa)) form a CR-type-like region. One copy of the CXXCXGXG motif repeat lies at 228–235 (CKYCLGTG). Residues 239 to 246 (CARCSSTG) form a CXXCXXXG motif repeat. The CXXCXGXG motif repeat unit spans residues 272-279 (CSNCSGAG). The CXXCXXXG motif repeat unit spans residues 283-290 (CPTCLCTG).

It belongs to the orange-like family. As to quaternary structure, interacts with ERF1-2. In terms of tissue distribution, expressed in young leaves, curds and flower buds.

The protein resides in the plastid. The protein localises to the chloroplast membrane. It localises to the nucleus. Its function is as follows. Involved in chromoplast differentiation. Is associated with a cellular process that triggers the differentiation of pro-plastids or other non-colored plastids into chromoplasts for carotenoid accumulation. Associated with carotenoid accumulation in de-etiolated cotyledons. Controls leaf petiole elongation by suppressing the expression of ERF1 genes. This is Protein ORANGE, chloroplastic from Brassica oleracea var. botrytis (Cauliflower).